The following is a 316-amino-acid chain: Phospho-N-acetylmuramoyl-pentapeptide-transferase (316 aa).

A run of 10 helical transmembrane segments spans residues Ile-5–Pro-25, Gly-49–Phe-69, Leu-76–Leu-96, Phe-116–Phe-136, Thr-141–Val-161, Gly-172–Leu-192, Ile-195–Leu-212, Ile-221–Leu-241, Leu-244–Ile-264, and Val-296–Ser-316.

This sequence belongs to the glycosyltransferase 4 family. MraY subfamily. Mg(2+) serves as cofactor.

The protein resides in the cell membrane. The catalysed reaction is UDP-N-acetyl-alpha-D-muramoyl-L-alanyl-gamma-D-glutamyl-meso-2,6-diaminopimeloyl-D-alanyl-D-alanine + di-trans,octa-cis-undecaprenyl phosphate = di-trans,octa-cis-undecaprenyl diphospho-N-acetyl-alpha-D-muramoyl-L-alanyl-D-glutamyl-meso-2,6-diaminopimeloyl-D-alanyl-D-alanine + UMP. The protein operates within cell wall biogenesis; peptidoglycan biosynthesis. Its function is as follows. Catalyzes the initial step of the lipid cycle reactions in the biosynthesis of the cell wall peptidoglycan: transfers peptidoglycan precursor phospho-MurNAc-pentapeptide from UDP-MurNAc-pentapeptide onto the lipid carrier undecaprenyl phosphate, yielding undecaprenyl-pyrophosphoryl-MurNAc-pentapeptide, known as lipid I. This Thermoanaerobacter pseudethanolicus (strain ATCC 33223 / 39E) (Clostridium thermohydrosulfuricum) protein is Phospho-N-acetylmuramoyl-pentapeptide-transferase.